A 682-amino-acid polypeptide reads, in one-letter code: MSRKQLALLEPALVRQALMDAVKKLSPRVQWHNPVMFIVWIGSVVTTALAVAMATGHLAGDAGFTGTISVWLWFTVLFANVAEALAEGRSKAQANSLKGINKTAFARKLREPKYGAQMDHVPADELRKGDVVLVEAGDIIPCDGEVIEGGASVDESAITGESAPVIRESGGDFASVTGGTRILSDWLVVQCSVNPGETFLDRMIAMVEGAQRRKTPNEIALTILLVALTIVFLLATATLWPFSAYGGTAVSVTVLVALLVCLIPTTIGGLLSAIGVAGMSRMLGANVIATSGRAVEAAGDVDVLLLDKTGTITLGNRQASEFLPAPGVDEKTLADAAQLSSLADETPEGRSIVILAKQRFNLRQRDVQSLQATFVPFTAQTRMSGINIQDRMIRKGSVDAIRRHIEANNGHFPPEVDRLVENVARQGATPLVVAEGATVLGVIALKDIVKGGIKERFAQLRKMGIKTVMITGDNRLTAAAIAAEAGVDDFLSEATPEAKLALIRQYQAEGRLVAMTGDGTNDAPALAQADVAVAMNSGTQAAKEAGNMVDLDSNPTKLIEVVHIGKQMLMTRGSLTTFSIANDVAKYFAIIPAAFAATYPQLNALNVMHLHSPASAILSAVIFNALIIVFLIPLALKGVSYKPLTAAAMLRRNLWIYGLGGLVVPFIGIKIIDMLLTVFGLV.

Helical transmembrane passes span 34 to 54 (PVMF…VAMA), 62 to 82 (AGFT…ANVA), 219 to 239 (IALT…TATL), and 254 to 274 (VLVA…LSAI). The 4-aspartylphosphate intermediate role is filled by D307. Residues D344, E348, 377–384 (FTAQTRMS), and K395 contribute to the ATP site. Mg(2+) contacts are provided by D518 and D522. The next 3 helical transmembrane spans lie at 588 to 608 (FAII…LNVM), 616 to 636 (AILS…PLAL), and 662 to 682 (LVVP…FGLV).

This sequence belongs to the cation transport ATPase (P-type) (TC 3.A.3) family. Type IA subfamily. The system is composed of three essential subunits: KdpA, KdpB and KdpC.

It is found in the cell inner membrane. It carries out the reaction K(+)(out) + ATP + H2O = K(+)(in) + ADP + phosphate + H(+). Functionally, part of the high-affinity ATP-driven potassium transport (or Kdp) system, which catalyzes the hydrolysis of ATP coupled with the electrogenic transport of potassium into the cytoplasm. This subunit is responsible for energy coupling to the transport system and for the release of the potassium ions to the cytoplasm. This chain is Potassium-transporting ATPase ATP-binding subunit, found in Enterobacter sp. (strain 638).